The chain runs to 112 residues: Large ribosomal subunit protein bL20c (112 aa).

This sequence belongs to the bacterial ribosomal protein bL20 family.

It is found in the plastid. Its subcellular location is the chloroplast. In terms of biological role, binds directly to 23S ribosomal RNA and is necessary for the in vitro assembly process of the 50S ribosomal subunit. It is not involved in the protein synthesizing functions of that subunit. The polypeptide is Large ribosomal subunit protein bL20c (rpl20) (Anthoceros angustus (Hornwort)).